The chain runs to 995 residues: Beta-agarase A (995 aa).

Positions 1–20 (MKIKFLSAAIAASLALPLSA) are cleaved as a signal peptide. The tract at residues 936-972 (GTNIGVSHSGPEAPDPGEPVDPPIDPPTPPTGGVTGG) is disordered. Residues 948 to 965 (APDPGEPVDPPIDPPTPP) are compositionally biased toward pro residues.

It belongs to the glycosyl hydrolase 50 family.

The enzyme catalyses Hydrolysis of (1-&gt;4)-beta-D-galactosidic linkages in agarose, giving the tetramer as the predominant product.. Hydrolyzes agarose and also neoagarotetraose to yield neoagarobiose. This chain is Beta-agarase A (agaA), found in Vibrio sp. (strain JT0107).